The following is an 875-amino-acid chain: Protein translocase subunit SecA (875 aa).

ATP is bound by residues Q87, G105 to T109, and D512. The Zn(2+) site is built by C860, C862, C871, and H872.

This sequence belongs to the SecA family. In terms of assembly, monomer and homodimer. Part of the essential Sec protein translocation apparatus which comprises SecA, SecYEG and auxiliary proteins SecDF-YajC and YidC. Zn(2+) is required as a cofactor.

Its subcellular location is the cell inner membrane. It localises to the cytoplasm. It catalyses the reaction ATP + H2O + cellular proteinSide 1 = ADP + phosphate + cellular proteinSide 2.. In terms of biological role, part of the Sec protein translocase complex. Interacts with the SecYEG preprotein conducting channel. Has a central role in coupling the hydrolysis of ATP to the transfer of proteins into and across the cell membrane, serving both as a receptor for the preprotein-SecB complex and as an ATP-driven molecular motor driving the stepwise translocation of polypeptide chains across the membrane. The chain is Protein translocase subunit SecA from Buchnera aphidicola subsp. Acyrthosiphon pisum (strain APS) (Acyrthosiphon pisum symbiotic bacterium).